Consider the following 92-residue polypeptide: RNA-binding protein Hfq (92 aa).

A Sm domain is found at 9–68; sequence DPFLNALRRERVPVSVYLVNGIKLQGTIESFDQFVVLLRNTVSQMVYKHAISTVVPARNV. The disordered stretch occupies residues 73–92; sequence GGGYVQSNEGNQAEDDDVEQ.

Belongs to the Hfq family. Homohexamer.

Its function is as follows. RNA chaperone that binds small regulatory RNA (sRNAs) and mRNAs to facilitate mRNA translational regulation in response to envelope stress, environmental stress and changes in metabolite concentrations. Also binds with high specificity to tRNAs. The sequence is that of RNA-binding protein Hfq from Xanthomonas axonopodis pv. citri (strain 306).